The chain runs to 46 residues: uncharacterized protein (46 aa).

This is an uncharacterized protein from Dictyostelium discoideum (Social amoeba).